The sequence spans 636 residues: Probable potassium transport system protein Kup (636 aa).

12 helical membrane passes run 22 to 42, 64 to 84, 115 to 135, 150 to 170, 182 to 202, 220 to 240, 261 to 281, 293 to 313, 351 to 371, 383 to 403, 408 to 428, and 433 to 453; these read VGLLVAAVGVVYGDIGTSPLY, ILSLILWSLLWVVSFKYVMFI, LMVICGLIGASLFYGDSMITP, FDGIDHWVVPISLVVLVALFL, LFGPIMVTWFLALGALGVHGI, FFVVHPGIGVAILGAVVLALT, WFILVLPALVLNYFGQGALLL, LLAPGWALLPLVGLATMATVI, IYIGAVNWTLMVGVVLLVIGF, VAVTGTMLITTVLVSAVMLLL, PLLAVPILVGFLLVDGLFFAA, and IAQGGAFPVLAGGVLYLLMST.

It belongs to the HAK/KUP transporter (TC 2.A.72) family.

It is found in the cell inner membrane. The catalysed reaction is K(+)(in) + H(+)(in) = K(+)(out) + H(+)(out). Its function is as follows. Transport of potassium into the cell. Likely operates as a K(+):H(+) symporter. The sequence is that of Probable potassium transport system protein Kup from Pseudomonas putida (strain ATCC 47054 / DSM 6125 / CFBP 8728 / NCIMB 11950 / KT2440).